A 133-amino-acid chain; its full sequence is Agouti-signaling protein (133 aa).

Positions 1-22 (MDVSRLLLATLLVCLCFLTAYS) are cleaved as a signal peptide. Asn39 is a glycosylation site (N-linked (GlcNAc...) asparagine). The tract at residues 56–95 (NKKSKKISRNEAEKKKRPSKRKAPMKNVARTRPPPPTPCV) is disordered. Residues 70–79 (KKRPSKRKAP) show a composition bias toward basic residues. 5 disulfides stabilise this stretch: Cys94-Cys109, Cys101-Cys115, Cys108-Cys126, Cys112-Cys133, and Cys117-Cys124. The Agouti domain maps to 94–133 (CVATRDSCKPPAPACCDPCAFCQCRFFRSACSCRVLNPTC).

The protein resides in the secreted. Its function is as follows. Involved in the regulation of melanogenesis. The binding of ASP to MC1R precludes alpha-MSH initiated signaling and thus blocks production of cAMP, leading to a down-regulation of eumelanogenesis (brown/black pigment) and thus increasing synthesis of pheomelanin (yellow/red pigment). This is Agouti-signaling protein (ASIP) from Bos taurus (Bovine).